The sequence spans 161 residues: Nucleotide-binding protein Pput_4372 (161 aa).

This sequence belongs to the YajQ family.

Its function is as follows. Nucleotide-binding protein. The sequence is that of Nucleotide-binding protein Pput_4372 from Pseudomonas putida (strain ATCC 700007 / DSM 6899 / JCM 31910 / BCRC 17059 / LMG 24140 / F1).